The following is a 172-amino-acid chain: Myosin regulatory light chain 12B (172 aa).

A compositionally biased stretch (basic residues) spans methionine 1–glutamine 16. A disordered region spans residues methionine 1–serine 20. Threonine 19 carries the post-translational modification Phosphothreonine; by MLCK and ZIPK/DAPK3. Serine 20 is subject to Phosphoserine; by MLCK and ZIPK/DAPK3. 3 EF-hand domains span residues serine 29–asparagine 64, aspartate 98–arginine 133, and phenylalanine 134–aspartate 169. Positions 42, 44, 46, and 53 each coordinate Ca(2+).

As to quaternary structure, myosin is a hexamer of 2 heavy chains and 4 light chains: interacts with myosin heavy chain MYO19. In terms of processing, phosphorylation increases the actin-activated myosin ATPase activity and thereby regulates the contractile activity. It is required to generate the driving force in the migration of the cells but not necessary for localization of myosin-2 at the leading edge. Phosphorylation is reduced following epigallocatechin-3-O-gallate treatment.

Its function is as follows. Myosin regulatory subunit that plays an important role in regulation of both smooth muscle and nonmuscle cell contractile activity via its phosphorylation. Phosphorylation triggers actin polymerization in vascular smooth muscle. Implicated in cytokinesis, receptor capping, and cell locomotion. The protein is Myosin regulatory light chain 12B (Myl12b) of Rattus norvegicus (Rat).